The primary structure comprises 372 residues: Glutamine synthetase (372 aa).

Residues 26–105 form the GS beta-grasp domain; it reads IIAEYVWIDS…VLAECWNNDG (80 aa). The GS catalytic domain maps to 112–372; that stretch reads HRHEAAKLFE…MTKEYERESL (261 aa).

The protein belongs to the glutamine synthetase family. As to quaternary structure, homooctamer.

It localises to the cytoplasm. The enzyme catalyses L-glutamate + NH4(+) + ATP = L-glutamine + ADP + phosphate + H(+). This chain is Glutamine synthetase (GLN1), found in Kluyveromyces lactis (strain ATCC 8585 / CBS 2359 / DSM 70799 / NBRC 1267 / NRRL Y-1140 / WM37) (Yeast).